Reading from the N-terminus, the 143-residue chain is Ribonuclease H (143 aa).

Residues 1 to 136 form the RNase H type-1 domain; it reads MQEIEIFCDG…CDSLAKLEAQ (136 aa). The Mg(2+) site is built by D9, E47, D69, and D128.

Belongs to the RNase H family. As to quaternary structure, monomer. Requires Mg(2+) as cofactor.

The protein localises to the cytoplasm. It catalyses the reaction Endonucleolytic cleavage to 5'-phosphomonoester.. Functionally, endonuclease that specifically degrades the RNA of RNA-DNA hybrids. The protein is Ribonuclease H of Helicobacter acinonychis (strain Sheeba).